We begin with the raw amino-acid sequence, 354 residues long: Guanine nucleotide-binding protein G(o) subunit alpha (354 aa).

Glycine 2 is lipidated: N-myristoyl glycine. The S-palmitoyl cysteine moiety is linked to residue cysteine 3. In terms of domain architecture, G-alpha spans 32–354; that stretch reads KDVKLLLLGA…AYNLRGCGLY (323 aa). Residues 35–48 are G1 motif; it reads KLLLLGAGESGKST. Positions 43, 46, 47, 48, 152, 176, 177, 178, and 179 each coordinate GTP. Serine 47 lines the Mg(2+) pocket. The segment at 174–182 is G2 motif; the sequence is DILRTRVKT. A Mg(2+)-binding site is contributed by threonine 182. The tract at residues 197–206 is G3 motif; it reads FRLFDVGGQR. The segment at 266 to 273 is G4 motif; the sequence is ILFLNKKD. Residues asparagine 270, aspartate 273, and cysteine 325 each coordinate GTP. A G5 motif region spans residues 324–329; that stretch reads TCATDT.

It belongs to the G-alpha family. G(i/o/t/z) subfamily. In terms of assembly, g proteins are composed of 3 units; alpha, beta and gamma.

It catalyses the reaction GTP + H2O = GDP + phosphate + H(+). Its function is as follows. Guanine nucleotide-binding proteins (G proteins) function as transducers downstream of G protein-coupled receptors (GPCRs) in numerous signaling cascades. The alpha chain contains the guanine nucleotide binding site and alternates between an active, GTP-bound state and an inactive, GDP-bound state. Signaling by an activated GPCR promotes GDP release and GTP binding. The alpha subunit has a low GTPase activity that converts bound GTP to GDP, thereby terminating the signal. Both GDP release and GTP hydrolysis are modulated by numerous regulatory proteins. Signaling is mediated via effector proteins, such as adenylate cyclase. Inhibits adenylate cyclase activity, leading to decreased intracellular cAMP levels. This Xenopus laevis (African clawed frog) protein is Guanine nucleotide-binding protein G(o) subunit alpha (gna0).